A 186-amino-acid polypeptide reads, in one-letter code: Large ribosomal subunit protein uL5 (186 aa).

The protein belongs to the universal ribosomal protein uL5 family. In terms of assembly, part of the 50S ribosomal subunit; part of the 5S rRNA/L5/L18/L25 subcomplex. Contacts the 5S rRNA and the P site tRNA. Forms a bridge to the 30S subunit in the 70S ribosome.

Its function is as follows. This is one of the proteins that bind and probably mediate the attachment of the 5S RNA into the large ribosomal subunit, where it forms part of the central protuberance. In the 70S ribosome it contacts protein S13 of the 30S subunit (bridge B1b), connecting the 2 subunits; this bridge is implicated in subunit movement. Contacts the P site tRNA; the 5S rRNA and some of its associated proteins might help stabilize positioning of ribosome-bound tRNAs. This chain is Large ribosomal subunit protein uL5, found in Phenylobacterium zucineum (strain HLK1).